The following is a 37-amino-acid chain: Albumin-2 (37 aa).

A Hemopexin repeat occupies 6–37 (IANFSVLNXEAYLFINDKYVLLDYAPGTXNDK).

As to quaternary structure, dimer. In terms of tissue distribution, expressed in seeds (at protein level).

The protein localises to the cytoplasm. It is found in the cytosol. Its function is as follows. Binds hemin and thiamine. The chain is Albumin-2 from Lens culinaris (Lentil).